A 314-amino-acid polypeptide reads, in one-letter code: Ribosomal protein uL3 glutamine methyltransferase (314 aa).

It belongs to the protein N5-glutamine methyltransferase family. PrmB subfamily.

The catalysed reaction is L-glutaminyl-[ribosomal protein uL3] + S-adenosyl-L-methionine = N(5)-methyl-L-glutaminyl-[ribosomal protein uL3] + S-adenosyl-L-homocysteine + H(+). Methylates large ribosomal subunit protein uL3 on a specific glutamine residue. The protein is Ribosomal protein uL3 glutamine methyltransferase of Francisella tularensis subsp. tularensis (strain SCHU S4 / Schu 4).